Here is a 516-residue protein sequence, read N- to C-terminus: Phosphatidylserine decarboxylase proenzyme 2, mitochondrial (516 aa).

The transit peptide at 1–21 (MRPRQRFRRFHPRWSKVNLRG) directs the protein to the mitochondrion. The Mitochondrial matrix portion of the chain corresponds to 22-33 (FGGVGALKGVKA). A helical membrane pass occupies residues 34–52 (LNGMNVRVSMRLKWISNRI). At 53–516 (HRIRRSRRLG…GQYVRVGEAL (464 aa)) the chain is on the mitochondrial intermembrane side. Residues Asp-159, His-373, and Ser-488 each act as charge relay system; for autoendoproteolytic cleavage activity in the active site. Catalysis depends on Ser-488, which acts as the Schiff-base intermediate with substrate; via pyruvic acid; for decarboxylase activity. At Ser-488 the chain carries Pyruvic acid (Ser); by autocatalysis.

Belongs to the phosphatidylserine decarboxylase family. PSD-B subfamily. Eukaryotic type I sub-subfamily. Heterodimer of a large membrane-associated beta subunit and a small pyruvoyl-containing alpha subunit. Requires pyruvate as cofactor. Is synthesized initially as an inactive proenzyme. Formation of the active enzyme involves a self-maturation process in which the active site pyruvoyl group is generated from an internal serine residue via an autocatalytic post-translational modification. Two non-identical subunits are generated from the proenzyme in this reaction, and the pyruvate is formed at the N-terminus of the alpha chain, which is derived from the carboxyl end of the proenzyme. The autoendoproteolytic cleavage occurs by a canonical serine protease mechanism, in which the side chain hydroxyl group of the serine supplies its oxygen atom to form the C-terminus of the beta chain, while the remainder of the serine residue undergoes an oxidative deamination to produce ammonia and the pyruvoyl prosthetic group on the alpha chain. During this reaction, the Ser that is part of the protease active site of the proenzyme becomes the pyruvoyl prosthetic group, which constitutes an essential element of the active site of the mature decarboxylase.

It localises to the mitochondrion. It is found in the mitochondrion inner membrane. The protein localises to the nucleus envelope. The protein resides in the lipid droplet. Its subcellular location is the endoplasmic reticulum membrane. It carries out the reaction a 1,2-diacyl-sn-glycero-3-phospho-L-serine + H(+) = a 1,2-diacyl-sn-glycero-3-phosphoethanolamine + CO2. The protein operates within phospholipid metabolism; phosphatidylethanolamine biosynthesis; phosphatidylethanolamine from CDP-diacylglycerol: step 2/2. Catalyzes the formation of phosphatidylethanolamine (PtdEtn) from phosphatidylserine (PtdSer). Plays a central role in phospholipid metabolism and in the interorganelle trafficking of phosphatidylserine. Together with psd1 and psd3, responsible for the majority of phosphatidylethanolamine synthesis. Plays a role in lipid droplet biogenesis at the endoplasmic reticulum membrane. This is Phosphatidylserine decarboxylase proenzyme 2, mitochondrial from Schizosaccharomyces pombe (strain 972 / ATCC 24843) (Fission yeast).